The sequence spans 559 residues: Transmembrane E3 ubiquitin-protein ligase FLY2 (559 aa).

Residues 1-29 (MNNLGNFGVWGFGFFSLSIWFAVLQQANG) form the signal peptide. Over 30–259 (LRPIRETARS…TSINVEVYYN (230 aa)) the chain is Lumenal. The chain crosses the membrane as a helical span at residues 260–280 (KAVNYTLMVTFVSFLQVLLLI). Over 281-294 (RQMEHSNTQSGAAK) the chain is Cytoplasmic. Residues 295–315 (VSIVMIGQQAIMDSYLCLLHL) traverse the membrane as a helical segment. Over 316 to 318 (TAG) the chain is Lumenal. Residues 319 to 339 (ILVESLFNAFATAAFFKFVVF) form a helical membrane-spanning segment. The Cytoplasmic segment spans residues 340-370 (SIFEMRYLLSIWKATRPSTSGEGWETMRREL). Residues 371 to 391 (SFLYSRFYGILLGGILLMYEF) traverse the membrane as a helical segment. Over 392-394 (HNY) the chain is Lumenal. A helical membrane pass occupies residues 395–415 (MRPILLLMYSFWIPQIVANVV). Residues 416–423 (RDSRKPLH) are Cytoplasmic-facing. A helical membrane pass occupies residues 424–444 (PYYILGMTVTRLAIPLYVFGC). Over 445-458 (PKNFMRVEPSKAWC) the chain is Lumenal. The chain crosses the membrane as a helical span at residues 459–479 (VSLCAFMGFQAGVLLLQHYFG). Over 480-559 (SRCFVPRKLL…PTCRRPLPPA (80 aa)) the chain is Cytoplasmic. Residues 509–553 (CVICMTTIDLRHRINDCMVTPCEHIFHSGCLQRWMDIKMECPTCR) form an RING-type; atypical zinc finger.

In terms of tissue distribution, highly expressed in stems. Expressed in root xylem and seed coat.

It is found in the endomembrane system. The catalysed reaction is S-ubiquitinyl-[E2 ubiquitin-conjugating enzyme]-L-cysteine + [acceptor protein]-L-lysine = [E2 ubiquitin-conjugating enzyme]-L-cysteine + N(6)-ubiquitinyl-[acceptor protein]-L-lysine.. It participates in protein modification; protein ubiquitination. Its function is as follows. E3 ubiquitin-protein ligase that may be involved in xylem development. The chain is Transmembrane E3 ubiquitin-protein ligase FLY2 from Arabidopsis thaliana (Mouse-ear cress).